The chain runs to 510 residues: Allene oxide synthase 2, chloroplastic (510 aa).

A chloroplast-targeting transit peptide spans 1–31 (MALTLSFSLPLPSLHQKIPSKYSTFRPIIVS). K127, H158, and K162 together coordinate heme b. The (13S)-hydroperoxy-(9Z,11E)-octadecadienoate site is built by N315 and K321. N315 contacts (13S)-hydroperoxy-(9Z,11E,15Z)-octadecatrienoate. 2 residues coordinate heme b: K463 and C465.

The protein belongs to the cytochrome P450 family. Heme b serves as cofactor. Expressed in flower buds, leaves, roots, stems, petioles and cotyledons. Not detected in ripe fruits. Expressed in sieve elements.

Its subcellular location is the plastid. It localises to the chloroplast inner membrane. It carries out the reaction (13S)-hydroperoxy-(9Z,11E,15Z)-octadecatrienoate = (9Z,13S,15Z)-12,13-epoxyoctadeca-9,11,15-trienoate + H2O. It catalyses the reaction (13S)-hydroperoxy-(9Z,11E)-octadecadienoate = (9Z,13S)-12,13-epoxyoctadeca-9,11-dienoate + H2O. Its function is as follows. Cytochrome P450 of the CYP74A subfamily involved in the biosynthesis of jasmonic acid from lipoxygenase-derived hydroperoxides of free fatty acids. Catalyzes the synthesis of unstable allene oxide, which is further converted spontaneously by hydrolysis or cyclization. Metabolizes 13- but not 9-hydroperoxides of linoleic and linolenic acids. Can use 15S-hydroperoxy-11(Z),13(E),17(Z)-eicosatrienoic acid (15-HPET) and 13S-hydroperoxy-9(Z),11(E),15(Z)-octadecatrienoic acid (13-HPOT) as substrates, but only 50% activity with 13S-hydroperoxy-9(Z),11(E)-octadecadienoic acid (13-HPOD). The sequence is that of Allene oxide synthase 2, chloroplastic from Solanum lycopersicum (Tomato).